The primary structure comprises 295 residues: Ribosomal protein L11 methyltransferase (295 aa).

Residues Thr146, Gly167, Asp189, and Asn231 each contribute to the S-adenosyl-L-methionine site.

It belongs to the methyltransferase superfamily. PrmA family.

It localises to the cytoplasm. The enzyme catalyses L-lysyl-[protein] + 3 S-adenosyl-L-methionine = N(6),N(6),N(6)-trimethyl-L-lysyl-[protein] + 3 S-adenosyl-L-homocysteine + 3 H(+). Methylates ribosomal protein L11. This Vibrio cholerae serotype O1 (strain M66-2) protein is Ribosomal protein L11 methyltransferase.